Consider the following 663-residue polypeptide: UvrABC system protein B (663 aa).

One can recognise a Helicase ATP-binding domain in the interval 26–414; it reads DGLESGLAKQ…DNVAEQVVRP (389 aa). 39-46 is a binding site for ATP; it reads GVTGSGKT. The Beta-hairpin signature appears at 92-115; sequence YYDYYQPEAYVPASDTFIEKDASI. Positions 430 to 596 constitute a Helicase C-terminal domain; it reads QVDDLMSEIR…GINKSVEDIL (167 aa). Residues 624-659 form the UVR domain; the sequence is AKQINALEKQMYAHAQNMEFELAAKIRDEYLLLKEQ.

This sequence belongs to the UvrB family. In terms of assembly, forms a heterotetramer with UvrA during the search for lesions. Interacts with UvrC in an incision complex.

It localises to the cytoplasm. The UvrABC repair system catalyzes the recognition and processing of DNA lesions. A damage recognition complex composed of 2 UvrA and 2 UvrB subunits scans DNA for abnormalities. Upon binding of the UvrA(2)B(2) complex to a putative damaged site, the DNA wraps around one UvrB monomer. DNA wrap is dependent on ATP binding by UvrB and probably causes local melting of the DNA helix, facilitating insertion of UvrB beta-hairpin between the DNA strands. Then UvrB probes one DNA strand for the presence of a lesion. If a lesion is found the UvrA subunits dissociate and the UvrB-DNA preincision complex is formed. This complex is subsequently bound by UvrC and the second UvrB is released. If no lesion is found, the DNA wraps around the other UvrB subunit that will check the other stand for damage. In Legionella pneumophila (strain Lens), this protein is UvrABC system protein B.